We begin with the raw amino-acid sequence, 498 residues long: Osteoclast stimulatory transmembrane protein (498 aa).

The Cytoplasmic portion of the chain corresponds to 1–51 (MRTIRAATEHLFGLGWKFWRLGICKAVVPLQAAWKAFSQPVPASCNELLTQ). The helical transmembrane segment at 52–72 (LLLCVSLASLIAGLAHHWLVS) threads the bilayer. Topologically, residues 73-81 (LQLYPLGPP) are extracellular. The chain crosses the membrane as a helical span at residues 82–102 (ALVTSLCGLFVFLSLGLVPPI). Residues 103-121 (RCLFVLSVPTLGSKQGRRL) are Cytoplasmic-facing. A helical transmembrane segment spans residues 122 to 142 (LLSYSAANLAVAVVPNVLGNV). Topologically, residues 143–226 (RAAGQVLSCV…LARAALGTQR (84 aa)) are extracellular. The chain crosses the membrane as a helical span at residues 227–247 (VVTGLFLLGLLGESAWYLHRY). Residues 248–303 (LTDLRFDNIYATRQLVRQLAQAGATHLLTSPPPWLLQTAQPKLSREELLSCLLRLG) lie on the Cytoplasmic side of the membrane. The helical transmembrane segment at 304 to 324 (LLALLLVATAVTVASDYGAFL) threads the bilayer. Residues 325–401 (LAQAAVAWAQ…QAQPPRVTAA (77 aa)) are Extracellular-facing. The helical transmembrane segment at 402–422 (LAAGALQLLAGATLVLQAYAW) threads the bilayer. The Cytoplasmic portion of the chain corresponds to 423–498 (RLRHTIAASF…DSLGPPYDLE (76 aa)). The segment at 449–498 (QRRHNQSDHLNKQPGTMATRESRKPGQGTRTLESQGPQAHDSLGPPYDLE) is disordered. The span at 476-485 (GTRTLESQGP) shows a compositional bias: polar residues.

As to expression, expressed in osteoclast (at protein level). Ubiquitous. Highly expressed in multi-nuclear osteoclast cells compared to mono-nuclear macrophages. Expressed in foreign body giant cells (FBGCs).

The protein localises to the membrane. Functionally, probable cell surface receptor that plays a role in cellular fusion and cell differentiation. Cooperates with DCSTAMP in modulating cell-cell fusion in both osteoclasts and foreign body giant cells (FBGCs). Involved in osteoclast bone resorption. Promotes osteoclast differentiation and may play a role in the multinucleated osteoclast maturation. This chain is Osteoclast stimulatory transmembrane protein (Ocstamp), found in Mus musculus (Mouse).